The primary structure comprises 1345 residues: DNA-directed RNA polymerase subunit beta' (1345 aa).

Residues Cys-60, Cys-62, Cys-75, and Cys-78 each contribute to the Zn(2+) site. Mg(2+) is bound by residues Asp-536, Asp-538, and Asp-540. The Zn(2+) site is built by Cys-895, Cys-974, Cys-981, and Cys-984.

It belongs to the RNA polymerase beta' chain family. In terms of assembly, the RNAP catalytic core consists of 2 alpha, 1 beta, 1 beta' and 1 omega subunit. When a sigma factor is associated with the core the holoenzyme is formed, which can initiate transcription. The cofactor is Mg(2+). Requires Zn(2+) as cofactor.

The enzyme catalyses RNA(n) + a ribonucleoside 5'-triphosphate = RNA(n+1) + diphosphate. Its function is as follows. DNA-dependent RNA polymerase catalyzes the transcription of DNA into RNA using the four ribonucleoside triphosphates as substrates. This chain is DNA-directed RNA polymerase subunit beta', found in Bifidobacterium longum (strain DJO10A).